Here is a 491-residue protein sequence, read N- to C-terminus: Proline-rich protein PRCC (491 aa).

Residues 1 to 100 form a mediates interaction with MAD2L2 region; that stretch reads MSLVAYASSD…PPPPGVSPAE (100 aa). Disordered stretches follow at residues 1-244, 260-313, and 432-454; these read MSLV…SPSA, ITQE…PAFQ, and EEKT…QRRK. A compositionally biased stretch (acidic residues) spans 10–26; it reads DESEPDEAEPEPEEEEA. Residues 40–49 are compositionally biased toward low complexity; that stretch reads ASLPAPKGPA. Positions 50–96 are enriched in pro residues; sequence LLPPPPQMLAPAFPPPLLLPPPTGDPRLQPPPPLPFGLGGFPPPPGV. Phosphoserine occurs at positions 97, 114, 157, 159, 212, and 218. Residues 111–120 are compositionally biased toward low complexity; sequence GLPSPRGPGL. Low complexity predominate over residues 230–244; the sequence is APVVGTTTTTPSPSA. Position 239 is a phosphothreonine (threonine 239). Phosphoserine occurs at positions 241 and 267. Acidic residues predominate over residues 262–272; that stretch reads QEEDDSDEEVA. The segment covering 287–307 has biased composition (pro residues); the sequence is GVEPYPYPIPTVPEELPPGTE.

In terms of assembly, interacts with MAD2L2; the interaction is direct. Ubiquitous in fetal and adult tissues.

The protein resides in the nucleus. Functionally, may regulate cell cycle progression through interaction with MAD2L2. This Homo sapiens (Human) protein is Proline-rich protein PRCC (PRCC).